A 153-amino-acid chain; its full sequence is Superoxide dismutase [Cu-Zn] (153 aa).

Cu cation-binding residues include H46, H48, and H63. A disulfide bridge connects residues C57 and C146. Residues G61–H80 are disordered. H63, H71, H80, and D83 together coordinate Zn(2+). A compositionally biased stretch (basic and acidic residues) spans G68 to H80. Residue H120 participates in Cu cation binding. Basic and acidic residues predominate over residues D124–K136. The interval D124–R143 is disordered. R143 contributes to the substrate binding site.

This sequence belongs to the Cu-Zn superoxide dismutase family. In terms of assembly, homodimer. Cu cation serves as cofactor. Zn(2+) is required as a cofactor.

The protein localises to the cytoplasm. The catalysed reaction is 2 superoxide + 2 H(+) = H2O2 + O2. In terms of biological role, destroys radicals which are normally produced within the cells and which are toxic to biological systems. This is Superoxide dismutase [Cu-Zn] (sodC) from Aspergillus flavus.